The following is a 131-amino-acid chain: Large ribosomal subunit protein bL17 (131 aa).

Belongs to the bacterial ribosomal protein bL17 family. Part of the 50S ribosomal subunit. Contacts protein L32.

In Thermotoga maritima (strain ATCC 43589 / DSM 3109 / JCM 10099 / NBRC 100826 / MSB8), this protein is Large ribosomal subunit protein bL17.